We begin with the raw amino-acid sequence, 230 residues long: Cytidylate kinase (230 aa).

12-20 (GPSGAGKGT) contributes to the ATP binding site.

This sequence belongs to the cytidylate kinase family. Type 1 subfamily.

Its subcellular location is the cytoplasm. It catalyses the reaction CMP + ATP = CDP + ADP. The catalysed reaction is dCMP + ATP = dCDP + ADP. The polypeptide is Cytidylate kinase (Shewanella putrefaciens (strain CN-32 / ATCC BAA-453)).